The primary structure comprises 379 residues: Alkanesulfonate monooxygenase (379 aa).

It belongs to the SsuD family.

The enzyme catalyses an alkanesulfonate + FMNH2 + O2 = an aldehyde + FMN + sulfite + H2O + 2 H(+). Catalyzes the desulfonation of aliphatic sulfonates. This Pseudomonas savastanoi pv. phaseolicola (strain 1448A / Race 6) (Pseudomonas syringae pv. phaseolicola (strain 1448A / Race 6)) protein is Alkanesulfonate monooxygenase.